The sequence spans 475 residues: Bifunctional protein HldE (475 aa).

The tract at residues 1–318 is ribokinase; the sequence is MMQYSPKFNN…ENAIHHREET (318 aa). Residue 195 to 198 coordinates ATP; it reads NMSE. Aspartate 264 is an active-site residue. The tract at residues 344 to 475 is cytidylyltransferase; it reads MTNGCFDILH…NVIKKIQASK (132 aa).

The protein in the N-terminal section; belongs to the carbohydrate kinase PfkB family. It in the C-terminal section; belongs to the cytidylyltransferase family. In terms of assembly, homodimer.

The enzyme catalyses D-glycero-beta-D-manno-heptose 7-phosphate + ATP = D-glycero-beta-D-manno-heptose 1,7-bisphosphate + ADP + H(+). It catalyses the reaction D-glycero-beta-D-manno-heptose 1-phosphate + ATP + H(+) = ADP-D-glycero-beta-D-manno-heptose + diphosphate. Its pathway is nucleotide-sugar biosynthesis; ADP-L-glycero-beta-D-manno-heptose biosynthesis; ADP-L-glycero-beta-D-manno-heptose from D-glycero-beta-D-manno-heptose 7-phosphate: step 1/4. The protein operates within nucleotide-sugar biosynthesis; ADP-L-glycero-beta-D-manno-heptose biosynthesis; ADP-L-glycero-beta-D-manno-heptose from D-glycero-beta-D-manno-heptose 7-phosphate: step 3/4. Functionally, catalyzes the phosphorylation of D-glycero-D-manno-heptose 7-phosphate at the C-1 position to selectively form D-glycero-beta-D-manno-heptose-1,7-bisphosphate. In terms of biological role, catalyzes the ADP transfer from ATP to D-glycero-beta-D-manno-heptose 1-phosphate, yielding ADP-D-glycero-beta-D-manno-heptose. This Actinobacillus pleuropneumoniae serotype 5b (strain L20) protein is Bifunctional protein HldE.